Reading from the N-terminus, the 263-residue chain is Protein TILLER ANGLE CONTROL 1 (263 aa).

The short motif at 55-61 (GILAIGT) is the IGT motif element. Residues 243–263 (GKKIHPEQLNGRSNAEGPLTA) form a disordered region.

The protein belongs to the TAC family. As to expression, highly expressed in leaf sheath pulvinus. Expressed in shoot apical meristem and leaves.

Its function is as follows. Involved in the regulation of leaf growth angle. Promotes horizontal shoot growth. The sequence is that of Protein TILLER ANGLE CONTROL 1 from Zea mays (Maize).